We begin with the raw amino-acid sequence, 1050 residues long: Beta-galactosidase (1050 aa).

Substrate-binding residues include Asn-110 and Asp-209. Asp-209 lines the Na(+) pocket. Mg(2+) contacts are provided by Glu-432, His-434, and Glu-477. Substrate contacts are provided by residues Glu-477 and 553–556 (EYAH). Glu-477 functions as the Proton donor in the catalytic mechanism. Glu-553 (nucleophile) is an active-site residue. Asn-613 is a binding site for Mg(2+). Na(+)-binding residues include Phe-617 and Asn-620. Residues Asn-620 and Trp-1023 each coordinate substrate.

Belongs to the glycosyl hydrolase 2 family. Homotetramer. Mg(2+) is required as a cofactor. Requires Na(+) as cofactor.

It catalyses the reaction Hydrolysis of terminal non-reducing beta-D-galactose residues in beta-D-galactosides.. The protein is Beta-galactosidase of Yersinia enterocolitica serotype O:8 / biotype 1B (strain NCTC 13174 / 8081).